The primary structure comprises 1249 residues: DNA-directed RNA polymerase subunit beta (1249 aa).

This sequence belongs to the RNA polymerase beta chain family. The RNAP catalytic core consists of 2 alpha, 1 beta, 1 beta' and 1 omega subunit. When a sigma factor is associated with the core the holoenzyme is formed, which can initiate transcription.

It carries out the reaction RNA(n) + a ribonucleoside 5'-triphosphate = RNA(n+1) + diphosphate. In terms of biological role, DNA-dependent RNA polymerase catalyzes the transcription of DNA into RNA using the four ribonucleoside triphosphates as substrates. The sequence is that of DNA-directed RNA polymerase subunit beta from Clostridium botulinum (strain Eklund 17B / Type B).